Consider the following 187-residue polypeptide: Imidazoleglycerol-phosphate dehydratase (187 aa).

The protein belongs to the imidazoleglycerol-phosphate dehydratase family.

The protein localises to the cytoplasm. It carries out the reaction D-erythro-1-(imidazol-4-yl)glycerol 3-phosphate = 3-(imidazol-4-yl)-2-oxopropyl phosphate + H2O. The protein operates within amino-acid biosynthesis; L-histidine biosynthesis; L-histidine from 5-phospho-alpha-D-ribose 1-diphosphate: step 6/9. This chain is Imidazoleglycerol-phosphate dehydratase, found in Pyrobaculum calidifontis (strain DSM 21063 / JCM 11548 / VA1).